The chain runs to 421 residues: UDP-N-acetylglucosamine 1-carboxyvinyltransferase 1 (421 aa).

22-23 (KN) serves as a coordination point for phosphoenolpyruvate. Arg95 contributes to the UDP-N-acetyl-alpha-D-glucosamine binding site. Cys119 (proton donor) is an active-site residue. Position 119 is a 2-(S-cysteinyl)pyruvic acid O-phosphothioketal (Cys119). UDP-N-acetyl-alpha-D-glucosamine contacts are provided by residues 124-128 (RPIEQ), Asp308, and Val330.

This sequence belongs to the EPSP synthase family. MurA subfamily.

The protein resides in the cytoplasm. The catalysed reaction is phosphoenolpyruvate + UDP-N-acetyl-alpha-D-glucosamine = UDP-N-acetyl-3-O-(1-carboxyvinyl)-alpha-D-glucosamine + phosphate. It functions in the pathway cell wall biogenesis; peptidoglycan biosynthesis. Cell wall formation. Adds enolpyruvyl to UDP-N-acetylglucosamine. The protein is UDP-N-acetylglucosamine 1-carboxyvinyltransferase 1 of Staphylococcus aureus (strain MRSA252).